A 153-amino-acid polypeptide reads, in one-letter code: Lipoprotein signal peptidase (153 aa).

The next 3 helical transmembrane spans lie at 6–26 (IVAVIVLLLIGLDQLVKSYIV), 60–80 (QQLLFAVITLVVVIGAIWYLH), and 85–105 (DSFWMVLGLTLIIAGGLGNFI). Residues Asp115 and Asp131 contribute to the active site. Residues 124–144 (FAIFNVADSYLTVGVIILLIA) form a helical membrane-spanning segment.

It belongs to the peptidase A8 family.

The protein localises to the cell membrane. The catalysed reaction is Release of signal peptides from bacterial membrane prolipoproteins. Hydrolyzes -Xaa-Yaa-Zaa-|-(S,diacylglyceryl)Cys-, in which Xaa is hydrophobic (preferably Leu), and Yaa (Ala or Ser) and Zaa (Gly or Ala) have small, neutral side chains.. It functions in the pathway protein modification; lipoprotein biosynthesis (signal peptide cleavage). Functionally, this protein specifically catalyzes the removal of signal peptides from prolipoproteins. The protein is Lipoprotein signal peptidase of Streptococcus pneumoniae (strain ATCC BAA-255 / R6).